We begin with the raw amino-acid sequence, 805 residues long: DNA gyrase subunit B (805 aa).

One can recognise a Toprim domain in the interval 435–550 (SEIFIVEGDS…RGYIYIAQPP (116 aa)). Mg(2+) is bound by residues glutamate 441, aspartate 515, and aspartate 517.

The protein belongs to the type II topoisomerase GyrB family. In terms of assembly, heterotetramer, composed of two GyrA and two GyrB chains. In the heterotetramer, GyrA contains the active site tyrosine that forms a transient covalent intermediate with DNA, while GyrB binds cofactors and catalyzes ATP hydrolysis. Mg(2+) serves as cofactor. The cofactor is Mn(2+). It depends on Ca(2+) as a cofactor.

Its subcellular location is the cytoplasm. It carries out the reaction ATP-dependent breakage, passage and rejoining of double-stranded DNA.. Functionally, a type II topoisomerase that negatively supercoils closed circular double-stranded (ds) DNA in an ATP-dependent manner to modulate DNA topology and maintain chromosomes in an underwound state. Negative supercoiling favors strand separation, and DNA replication, transcription, recombination and repair, all of which involve strand separation. Also able to catalyze the interconversion of other topological isomers of dsDNA rings, including catenanes and knotted rings. Type II topoisomerases break and join 2 DNA strands simultaneously in an ATP-dependent manner. This Caulobacter vibrioides (strain ATCC 19089 / CIP 103742 / CB 15) (Caulobacter crescentus) protein is DNA gyrase subunit B.